Reading from the N-terminus, the 297-residue chain is Bifunctional protein FolD (297 aa).

NADP(+) is bound by residues 167–169 (GRS), Ser192, and Ile233.

Belongs to the tetrahydrofolate dehydrogenase/cyclohydrolase family. As to quaternary structure, homodimer.

The enzyme catalyses (6R)-5,10-methylene-5,6,7,8-tetrahydrofolate + NADP(+) = (6R)-5,10-methenyltetrahydrofolate + NADPH. It catalyses the reaction (6R)-5,10-methenyltetrahydrofolate + H2O = (6R)-10-formyltetrahydrofolate + H(+). The protein operates within one-carbon metabolism; tetrahydrofolate interconversion. Functionally, catalyzes the oxidation of 5,10-methylenetetrahydrofolate to 5,10-methenyltetrahydrofolate and then the hydrolysis of 5,10-methenyltetrahydrofolate to 10-formyltetrahydrofolate. This Caulobacter vibrioides (strain ATCC 19089 / CIP 103742 / CB 15) (Caulobacter crescentus) protein is Bifunctional protein FolD.